The primary structure comprises 272 residues: Putative UTP--glucose-1-phosphate uridylyltransferase (272 aa).

This sequence belongs to the UDPGP type 2 family.

The enzyme catalyses alpha-D-glucose 1-phosphate + UTP + H(+) = UDP-alpha-D-glucose + diphosphate. The polypeptide is Putative UTP--glucose-1-phosphate uridylyltransferase (ytdA) (Bacillus subtilis (strain 168)).